A 200-amino-acid polypeptide reads, in one-letter code: Glycerol-3-phosphate acyltransferase (200 aa).

4 helical membrane passes run 1–21 (MITVVLIFSAYLLGSISFAVV), 84–104 (VIAGAALAVFLGHLFPIFLAF), 116–136 (ILLGLNPWLGVLTISTWMVVA), and 159–179 (FLLEKGILIMAVSIISVLLIL).

This sequence belongs to the PlsY family. As to quaternary structure, probably interacts with PlsX.

The protein resides in the cell inner membrane. The catalysed reaction is an acyl phosphate + sn-glycerol 3-phosphate = a 1-acyl-sn-glycero-3-phosphate + phosphate. It participates in lipid metabolism; phospholipid metabolism. Catalyzes the transfer of an acyl group from acyl-phosphate (acyl-PO(4)) to glycerol-3-phosphate (G3P) to form lysophosphatidic acid (LPA). This enzyme utilizes acyl-phosphate as fatty acyl donor, but not acyl-CoA or acyl-ACP. The polypeptide is Glycerol-3-phosphate acyltransferase (Nitrosomonas europaea (strain ATCC 19718 / CIP 103999 / KCTC 2705 / NBRC 14298)).